Reading from the N-terminus, the 210-residue chain is NAD(P)H-quinone oxidoreductase subunit I (210 aa).

4Fe-4S ferredoxin-type domains lie at 54-83 (GRIHFEFDKCIACEICVRVCPIDLPVVDWV) and 94-123 (YSYSIDFGVCIFCANCVEFCPTNCLSVTED). The [4Fe-4S] cluster site is built by Cys-63, Cys-66, Cys-69, Cys-73, Cys-103, Cys-106, Cys-109, and Cys-113.

The protein belongs to the complex I 23 kDa subunit family. NDH-1 is composed of at least 11 different subunits. Requires [4Fe-4S] cluster as cofactor.

The protein localises to the cellular thylakoid membrane. The catalysed reaction is a plastoquinone + NADH + (n+1) H(+)(in) = a plastoquinol + NAD(+) + n H(+)(out). It carries out the reaction a plastoquinone + NADPH + (n+1) H(+)(in) = a plastoquinol + NADP(+) + n H(+)(out). NDH-1 shuttles electrons from an unknown electron donor, via FMN and iron-sulfur (Fe-S) centers, to quinones in the respiratory and/or the photosynthetic chain. The immediate electron acceptor for the enzyme in this species is believed to be plastoquinone. Couples the redox reaction to proton translocation, and thus conserves the redox energy in a proton gradient. This chain is NAD(P)H-quinone oxidoreductase subunit I, found in Synechococcus sp. (strain JA-3-3Ab) (Cyanobacteria bacterium Yellowstone A-Prime).